The following is a 303-amino-acid chain: Acetyltransferase ataH (303 aa).

The N-terminal stretch at 1–23 (MPTTAAFLRALYILTTLRGIGTS) is a signal peptide. A run of 3 helical transmembrane segments spans residues 42–62 (FLLHTLVIIAAKYLVLDMMTF), 194–214 (LVFAISSCLHLAIDGRAGIML), and 257–277 (GYIWTWAFLSLVAPMYNFPLF).

The protein belongs to the wax synthase family.

The protein resides in the membrane. It functions in the pathway mycotoxin biosynthesis. In terms of biological role, acetyltransferase; part of the gene cluster that mediates the biosynthesis of acetylaranotin, a member of the epipolythiodioxopiperazine (ETP) class of toxins characterized by a disulfide-bridged cyclic dipeptide. The first step of acetylaranotin biosynthesis is performed by the NRPS ataP which produces diketopiperazine cyclo-L-Phe-L-Phe via the condensation of 2 phenylalanines (L-Phe). The ataC domain of ataTC then catalyzes the formation of bishydroxylation of cyclo-L-Phe-L-Phe. The glutathione S-transferase domain ataG in ataIMG further catalyzes the conjugation of two glutathiones to the bishydroxylated intermediate. Next, the dipeptidase ataJ removes the Glu residues. The following step is performed by the carbon sulfur lyase domain ataI of ataIMG which may convert the bis-cysteinyl adduct to yield an epidithiol intermediate. The ataT domain from ataTC then catalyzes the oxidation of the free dithiols, followed by a cyclization step catalyzed by the cytochrome P450 ataF. AtaF probably acts as an epoxidase to promote a dual epoxidation formation at C8 and C9 along with C8' and C9', followed by the spontaneous nucleophilic attack of the amide nitrogens N10 and N10' to yield an intermediate with the pyrrolidine partial structure. The final steps of acetylaranotin biosynthesis involve the acetylation and ring rearrangement of an epitetrathiodiketopiperazine intermediate to produce acetylaranotin. AtaH probably catalyzes the acetylation of epitetrathiodiketopiperazine to produce a diacetate and ataY is responsible for the formation of the dihydrooxepin moiety that converts the diacetate intermediate to acetylaranotin via acetylapoaranotin. Both enzymes could function independently in the absence of the other. The acetylaranotin bis-thiomethyltransferase ataS located outside of acetylaranotin gene cluster is the main thiomethyltransferase responsible for converting acetylaranotin and its related intermediates to their methylated forms. In Aspergillus terreus (strain NIH 2624 / FGSC A1156), this protein is Acetyltransferase ataH.